Here is a 46-residue protein sequence, read N- to C-terminus: Iota-conotoxin-like R11.7 (46 aa).

2 positions are modified to 4-hydroxyproline: P2 and P11. Disulfide bonds link C5–C19, C12–C22, C18–C27, and C21–C38. Residue P29 is modified to 4-hydroxyproline. D-phenylalanine is present on F44.

Belongs to the conotoxin I1 superfamily. Expressed by the venom duct.

The protein localises to the secreted. Its function is as follows. Iota-conotoxins bind to voltage-gated sodium channels (Nav) and act as agonists by shifting the voltage-dependence of activation to more hyperpolarized levels. Produces general excitatory symptoms. The chain is Iota-conotoxin-like R11.7 from Conus radiatus (Rayed cone).